The primary structure comprises 177 residues: Adenylate kinase (177 aa).

Position 13-18 (G13–T18) interacts with ATP. The segment at S33 to A62 is NMP. Residues S34, R39, R60–A62, G85–R88, and Q92 contribute to the AMP site. The interval G119–D127 is LID. R120 is a binding site for ATP. Positions 124 and 135 each coordinate AMP.

The protein belongs to the adenylate kinase family. Monomer.

It localises to the cytoplasm. The enzyme catalyses AMP + ATP = 2 ADP. Its function is as follows. Catalyzes the reversible transfer of the terminal phosphate group between ATP and AMP. Plays an important role in cellular energy homeostasis and in adenine nucleotide metabolism. In Encephalitozoon cuniculi (strain GB-M1) (Microsporidian parasite), this protein is Adenylate kinase.